The primary structure comprises 280 residues: Tryptophan synthase alpha chain (280 aa).

Residues E49 and D60 each act as proton acceptor in the active site.

This sequence belongs to the TrpA family. As to quaternary structure, tetramer of two alpha and two beta chains.

The enzyme catalyses (1S,2R)-1-C-(indol-3-yl)glycerol 3-phosphate + L-serine = D-glyceraldehyde 3-phosphate + L-tryptophan + H2O. The protein operates within amino-acid biosynthesis; L-tryptophan biosynthesis; L-tryptophan from chorismate: step 5/5. In terms of biological role, the alpha subunit is responsible for the aldol cleavage of indoleglycerol phosphate to indole and glyceraldehyde 3-phosphate. This Corynebacterium efficiens (strain DSM 44549 / YS-314 / AJ 12310 / JCM 11189 / NBRC 100395) protein is Tryptophan synthase alpha chain.